We begin with the raw amino-acid sequence, 152 residues long: uncharacterized protein (152 aa).

The protein localises to the mitochondrion. This is an uncharacterized protein from Arabidopsis thaliana (Mouse-ear cress).